A 31-amino-acid chain; its full sequence is Mycofactocin precursor peptide (31 aa).

The protein belongs to the mycofactocin precursor peptide family. In terms of processing, the post-translational modifications that lead to mycofactocin involve oxidative decarboxylation of the C-terminal tyrosine residue catalyzed by MftC, introduction of a tyramine-valine cross-link, removal of the modified C-terminal dipeptide by MftE. The released dipeptide then undergoes oxidative deamination by MftD, glycosylation by MftF and methylation by an unknown enzyme.

In terms of biological role, precursor peptide that leads to mycofactocin (MFT) after extensive post-translational modifications by enzymes encoded by adjacent genes. Mycofactocin acts as a redox cofactor of nicotinamide-dependent oxidoreductases encoded in the same locus. Is required for the in vivo ethanol assimilation in M.smegmatis. In Mycolicibacterium smegmatis (strain ATCC 700084 / mc(2)155) (Mycobacterium smegmatis), this protein is Mycofactocin precursor peptide.